A 118-amino-acid polypeptide reads, in one-letter code: UPF0251 protein Teth39_0655 (118 aa).

The protein belongs to the UPF0251 family.

The protein is UPF0251 protein Teth39_0655 of Thermoanaerobacter pseudethanolicus (strain ATCC 33223 / 39E) (Clostridium thermohydrosulfuricum).